A 321-amino-acid chain; its full sequence is Protein APA1 (321 aa).

The disordered stretch occupies residues 50–70; the sequence is SLIEKPERGQTPEGEDPLGKP. Lys-54 provides a ligand contact to substrate. A Phosphothreonine modification is found at Thr-60. Residues 93-94, Asn-145, and 151-154 each bind substrate; these read NK and GSSL. His-158 functions as the Nucleophile in the catalytic mechanism. Residues Gln-160, 273-275, Met-280, and Lys-284 each bind substrate; that span reads NST.

It belongs to the ATP adenylyltransferase family. As to quaternary structure, monomer. Requires a divalent metal cation as cofactor. In terms of processing, the N-terminus is blocked.

The protein localises to the cytoplasm. It is found in the nucleus. The catalysed reaction is ADP + ATP + H(+) = P(1),P(4)-bis(5'-adenosyl) tetraphosphate + phosphate. The enzyme catalyses sulfate + ADP + H(+) = adenosine 5'-phosphosulfate + phosphate. Its function is as follows. Ap4A phosphorylase catalyzes the phosphorolytic degradation of bis(5'-adenosyl) tetraphosphate (Ap4A) into ADP and ATP. Can also use other Np4N' nucleotides (where N and N' stand for A,C,G or U) as substrates with equal efficiency. Cannot catalyze the reverse reaction. Additionally, this enzyme can also catalyze the phosphorolytic degradation of adenosine 5'-phosphosulfate (AMPS) into ADP and sulfate, the reversible exchange reaction between inorganic phosphate and the beta-phosphate of a nucleoside diphosphate (NDP), and the synthesis of Ap4A from AMPS plus ATP. The chain is Protein APA1 from Saccharomyces cerevisiae (strain ATCC 204508 / S288c) (Baker's yeast).